Reading from the N-terminus, the 94-residue chain is uncharacterized protein (94 aa).

2 helical membrane-spanning segments follow: residues 9–29 and 34–54; these read TLAK…FFST and LIEL…VFIV.

It localises to the cell membrane. This is an uncharacterized protein from Bacillus subtilis (strain 168).